We begin with the raw amino-acid sequence, 603 residues long: MIQSDEDNLDSSETTASTSYSGTSSVSSRLQLRTSLFFENLNGAHGNPDAETEMATVAYETTSRGQGFAVYINNERFSQIMGASTSSSSSSNSSSITQFHDTQDNNIPSNTTVRPTSLRRDNEDTVPLRNVTPSQNAAVRPERAVNSPSSQRLSCALTISTSVLMGEDVEGSPIEQEHSRVVSSLYSSLANRGNDESKNGTPPRPTSIEPNETTEHSFFSYHYDDTLEPDVEEAVRLTKNKTSNVNFISSTGSKGEGETEDEVIDQYEPVNESKFIPHKLKIPEKAGSIKSSTSDDSHSPGAPGTSARKIKIPQSPSLIGNILIPSHNSDSSNESSPKDHIGHNNEEKFSSKSTRKPSTSLEEEGPPIGLPSIPVLRSVSGPSKWTKTPLRLESGNSTKSDPFSRYEGHKTPSPLTKMNKKKNKTLPEHGQPLVLAPIKSQSSESDTGQNSIIEKPARSIRRKQQEKTDNRKEDRHDAENIDLEARMPIQHIDTASIHSFDSGQNGFRDVYSIENIIVILLCCSIVPPLFFIIGCSSRRKLVSDYRLMRLLMNKEHRAALLQGFIWDVDLRWFRMFCLILGAAETVIVMAGIAIGFGVGITRE.

Residues 1 to 10 are compositionally biased toward acidic residues; sequence MIQSDEDNLD. Disordered stretches follow at residues 1–25, 83–150, and 190–212; these read MIQSDEDNLDSSETTASTSYSGTSS, ASTS…SPSS, and ANRGNDESKNGTPPRPTSIEPNE. Residues 1–515 lie on the Extracellular side of the membrane; sequence MIQSDEDNLD…GFRDVYSIEN (515 aa). Composition is skewed to low complexity over residues 11-25 and 84-95; these read SSETTASTSYSGTSS and STSSSSSSNSSS. N-linked (GlcNAc...) asparagine glycosylation is found at N92, N110, N211, N240, N271, and N333. A compositionally biased stretch (polar residues) spans 96 to 115; it reads ITQFHDTQDNNIPSNTTVRP. The tract at residues 286–479 is disordered; sequence AGSIKSSTSD…NRKEDRHDAE (194 aa). The segment covering 325–335 has biased composition (low complexity); that stretch reads PSHNSDSSNES. The segment covering 336-350 has biased composition (basic and acidic residues); that stretch reads SPKDHIGHNNEEKFS. N396 and N423 each carry an N-linked (GlcNAc...) asparagine glycan. Residues 439–452 are compositionally biased toward polar residues; sequence KSQSSESDTGQNSI. The span at 463-479 shows a compositional bias: basic and acidic residues; sequence KQQEKTDNRKEDRHDAE. The chain crosses the membrane as a helical span at residues 516-536; it reads IIVILLCCSIVPPLFFIIGCS. Over 537 to 577 the chain is Cytoplasmic; sequence SRRKLVSDYRLMRLLMNKEHRAALLQGFIWDVDLRWFRMFC. The helical transmembrane segment at 578 to 598 threads the bilayer; sequence LILGAAETVIVMAGIAIGFGV. Residues 599 to 603 are Extracellular-facing; the sequence is GITRE.

The protein belongs to the BUD8/9 family. As to quaternary structure, interacts with RAX1 RAX2 at the proximal or distal pole in unbudded cells. N- and O-glycosylated.

The protein resides in the cell membrane. Its subcellular location is the bud tip. Functionally, involved in positioning the distal bud pole signal. This Saccharomyces cerevisiae (strain ATCC 204508 / S288c) (Baker's yeast) protein is Bud site selection protein 8.